We begin with the raw amino-acid sequence, 365 residues long: Cobalt-precorrin-5B C(1)-methyltransferase (365 aa).

It belongs to the CbiD family.

The catalysed reaction is Co-precorrin-5B + S-adenosyl-L-methionine = Co-precorrin-6A + S-adenosyl-L-homocysteine. It functions in the pathway cofactor biosynthesis; adenosylcobalamin biosynthesis; cob(II)yrinate a,c-diamide from sirohydrochlorin (anaerobic route): step 6/10. Catalyzes the methylation of C-1 in cobalt-precorrin-5B to form cobalt-precorrin-6A. The protein is Cobalt-precorrin-5B C(1)-methyltransferase of Clostridium perfringens (strain ATCC 13124 / DSM 756 / JCM 1290 / NCIMB 6125 / NCTC 8237 / Type A).